The following is a 314-amino-acid chain: MQIHLANPRGFCAGVDRAITIVERALEIFSPPIYVRHEVVHNKFVVDGLKERGAVFVDELVEVPDDSIVIFSAHGVSQAVRNEASSRGLKVFDATCPLVTKVHMEVMRASSKGTECVLIGHQGHPEVEGTMGQYDNQDGGIYLVESVDDVARLEVKNPSALYYCSQTTLSVDDTADVIDALRAKFPAIEGPRKDDICYATQNRQDSVRELSADCDILLVVGAQNSSNSNRLRELAEKIGAKAHLIADANCIQKEWLANAKHIGVTAGASAPEVLVQGVVDRLKEWGASSATERPGRLENIEFAVPKELRVKQVS.

Residue Cys12 participates in [4Fe-4S] cluster binding. Residues His41 and His74 each coordinate (2E)-4-hydroxy-3-methylbut-2-enyl diphosphate. Positions 41 and 74 each coordinate dimethylallyl diphosphate. Isopentenyl diphosphate-binding residues include His41 and His74. Residue Cys96 participates in [4Fe-4S] cluster binding. Residue His124 coordinates (2E)-4-hydroxy-3-methylbut-2-enyl diphosphate. His124 serves as a coordination point for dimethylallyl diphosphate. His124 provides a ligand contact to isopentenyl diphosphate. Catalysis depends on Glu126, which acts as the Proton donor. Thr167 lines the (2E)-4-hydroxy-3-methylbut-2-enyl diphosphate pocket. Position 197 (Cys197) interacts with [4Fe-4S] cluster. (2E)-4-hydroxy-3-methylbut-2-enyl diphosphate is bound by residues Ser225, Ser226, Asn227, and Ser269. Ser225, Ser226, Asn227, and Ser269 together coordinate dimethylallyl diphosphate. 4 residues coordinate isopentenyl diphosphate: Ser225, Ser226, Asn227, and Ser269.

The protein belongs to the IspH family. [4Fe-4S] cluster serves as cofactor.

The enzyme catalyses isopentenyl diphosphate + 2 oxidized [2Fe-2S]-[ferredoxin] + H2O = (2E)-4-hydroxy-3-methylbut-2-enyl diphosphate + 2 reduced [2Fe-2S]-[ferredoxin] + 2 H(+). It catalyses the reaction dimethylallyl diphosphate + 2 oxidized [2Fe-2S]-[ferredoxin] + H2O = (2E)-4-hydroxy-3-methylbut-2-enyl diphosphate + 2 reduced [2Fe-2S]-[ferredoxin] + 2 H(+). Its pathway is isoprenoid biosynthesis; dimethylallyl diphosphate biosynthesis; dimethylallyl diphosphate from (2E)-4-hydroxy-3-methylbutenyl diphosphate: step 1/1. It functions in the pathway isoprenoid biosynthesis; isopentenyl diphosphate biosynthesis via DXP pathway; isopentenyl diphosphate from 1-deoxy-D-xylulose 5-phosphate: step 6/6. Catalyzes the conversion of 1-hydroxy-2-methyl-2-(E)-butenyl 4-diphosphate (HMBPP) into a mixture of isopentenyl diphosphate (IPP) and dimethylallyl diphosphate (DMAPP). Acts in the terminal step of the DOXP/MEP pathway for isoprenoid precursor biosynthesis. This is 4-hydroxy-3-methylbut-2-enyl diphosphate reductase from Pseudoalteromonas atlantica (strain T6c / ATCC BAA-1087).